A 457-amino-acid chain; its full sequence is Exodeoxyribonuclease 7 large subunit (457 aa).

Belongs to the XseA family. Heterooligomer composed of large and small subunits.

The protein localises to the cytoplasm. It catalyses the reaction Exonucleolytic cleavage in either 5'- to 3'- or 3'- to 5'-direction to yield nucleoside 5'-phosphates.. In terms of biological role, bidirectionally degrades single-stranded DNA into large acid-insoluble oligonucleotides, which are then degraded further into small acid-soluble oligonucleotides. In Citrobacter koseri (strain ATCC BAA-895 / CDC 4225-83 / SGSC4696), this protein is Exodeoxyribonuclease 7 large subunit.